Consider the following 348-residue polypeptide: Methylthioribose-1-phosphate isomerase (348 aa).

Substrate contacts are provided by residues 51-53 (RGA), arginine 94, and glutamine 199. Aspartate 240 (proton donor) is an active-site residue. Position 250–251 (250–251 (NK)) interacts with substrate.

The protein belongs to the eIF-2B alpha/beta/delta subunits family. MtnA subfamily.

The enzyme catalyses 5-(methylsulfanyl)-alpha-D-ribose 1-phosphate = 5-(methylsulfanyl)-D-ribulose 1-phosphate. Its pathway is amino-acid biosynthesis; L-methionine biosynthesis via salvage pathway; L-methionine from S-methyl-5-thio-alpha-D-ribose 1-phosphate: step 1/6. Functionally, catalyzes the interconversion of methylthioribose-1-phosphate (MTR-1-P) into methylthioribulose-1-phosphate (MTRu-1-P). This is Methylthioribose-1-phosphate isomerase from Nitrosococcus oceani (strain ATCC 19707 / BCRC 17464 / JCM 30415 / NCIMB 11848 / C-107).